Consider the following 80-residue polypeptide: Conotoxin Pu11.1 (80 aa).

A signal peptide spans 1 to 19 (MKLVLAIVLILMLLSLSTG). The propeptide occupies 20–42 (AEMSDNHASRSATALTDRLLGPK). 4 cysteine pairs are disulfide-bonded: Cys-46-Cys-60, Cys-53-Cys-65, Cys-59-Cys-72, and Cys-64-Cys-79.

It belongs to the conotoxin I3 superfamily. In terms of tissue distribution, expressed by the venom duct.

The protein resides in the secreted. The sequence is that of Conotoxin Pu11.1 from Conus pulicarius (Flea-bitten cone).